The sequence spans 1387 residues: MNISSMLSSDNNVSLKESMTTATDQQQQQQAESVDHASINGNGQTSVSAVNNVQENHLSEFHSSNQQHSSIPPVGTTVEHATTTTTTATNHQPVNSSPLKHSVDENSNPTTISSLKKDTNSIIASILPESYQFDNSYTPTIDQKYKSVFESNINVINQLDQYQQMGHHLKLMKFDEVKLNNYLINTGQFASNYIDRVVAEDISSRNNKISETNKNKELIAIDYSKPLHHNSTRGKEFKWGSTRKIHKVEHKSRRRKPAATTSTTDDSNKAVAAAANGTKDHSATAGTTASANGSDTPDRRHQRQSSKPSTPILIKPKTEPGKGSPEIQPRRSSRPKVKRKAFEDELETADKQSSTQQVKKSQESTGRDHKRVKIENKQEEQQQHQQQQQADEEDEAEAEAEAEQKPKSGALSEAAAAGMTAKEFKAFMRQYDNTYIAIWKDLSRKDGPKGSRSMQQATQGRLINLRKTALLAAREAKRWQLKNTKNQKDLTTKARRAMREMFNFWKRNERLERDLKKKHEKELLDKAKKEEEEREAKRQSRKLNFLITQTELYSHFIGKKIKTDELEGTNADDNLKSNTKEHLDKYADVDGSATHDINAVDFDNDDEEALRRMAAQNAQNALIEVQNKAKQFDNSEESFKNPDTNGEEMNFQNPTLLGDITIPQPNMLKCTLKEYQLKGLNWLANLYEQGINGILADEMGLGKTVQSISVLAYLAETYNMWGPFLVVTPASTLHNWQQEITKFVPEFKVLPYWGNAKDRKILRKFWDRKSLRYDKDSPFHVLVTSYQLIVADIAYFQKMKWQYMILDEAQAIKSSSSSRWKSLLNLTCRNRLLLTGTPIQNSMQELWALLHFIMPSIFDSHDEFSDWFAKDIESHAQSNTSLDEQQLRRLHMILKPFMLRRIKKNVQSELGDKVEIDVYCDLTTRQKKLYQQLRSQISMSDTDLLELESNSTSSDSSLANLVMQFRKVCNHPDLFERADVNSPFSFGKFAETGSFLRETNELDVNYSTENIVQYDLPRLIYDELLTPNYNKSIRDSIYSKFSIYNPENMNATGWLQGINVSPNELKHYSQMDILSRAIEMQNKPTETEKLERINYLYEGDYIPKNKKLLITDHSTSTNSSFISNSLVFSDLVSIKEKVGEDMYLNKLEPAVTPIASAPPITVNCSSMNFTNKMNNTLFDSNIRSSLIPLSLSTELKLMKDQIPLEQYPKSNMLPMPIFDYSNIRMPSMDRFIAESGKLAKLDELLIDLKRGGHRILIYFQMTRMMQIFEEYLAYKSYKYIRLDGSTTIESRREMVQAWQTNPEIFIFMLSTRAGGLGLNLTSADTVIFYDSDWNPTIDSQAMDRAHRIGQTKQVKVFRLVTRNTIEQKILERAKEKEEIQKLVVGNM.

2 stretches are compositionally biased toward polar residues: residues 1–24 (MNIS…TATD) and 90–113 (NHQP…TTIS). Disordered stretches follow at residues 1–45 (MNIS…NGQT), 85–113 (TTTA…TTIS), and 230–414 (NSTR…LSEA). The segment covering 241–257 (STRKIHKVEHKSRRRKP) has biased composition (basic residues). Residues 283 to 295 (ATAGTTASANGSD) are compositionally biased toward low complexity. A compositionally biased stretch (basic and acidic residues) spans 360–382 (KSQESTGRDHKRVKIENKQEEQQ). Over residues 390-401 (ADEEDEAEAEAE) the composition is skewed to acidic residues. A DBINO domain is found at 438–563 (IWKDLSRKDG…SHFIGKKIKT (126 aa)). Positions 480–551 (QLKNTKNQKD…KLNFLITQTE (72 aa)) form a coiled coil. Positions 684–856 (ANLYEQGING…WALLHFIMPS (173 aa)) constitute a Helicase ATP-binding domain. 697–704 (DEMGLGKT) is an ATP binding site. The DEAQ box signature appears at 807–810 (DEAQ). A Helicase C-terminal domain is found at 1240–1387 (KLDELLIDLK…EIQKLVVGNM (148 aa)).

It belongs to the SNF2/RAD54 helicase family. Component of the INO80 chromatin-remodeling complex.

Its subcellular location is the nucleus. It catalyses the reaction ATP + H2O = ADP + phosphate + H(+). Functionally, ATPase component of the INO80 complex which remodels chromatin by shifting nucleosomes and is involved in DNA repair. The sequence is that of Chromatin-remodeling ATPase INO80 (INO80) from Candida albicans (strain SC5314 / ATCC MYA-2876) (Yeast).